Consider the following 503-residue polypeptide: MLEKFVDSLWKFCRKSKFQYMTPVADAVDSFCFEPLHTPSSPPFVRDAVDVKRWMMLVVIALMPTVFVAIWNSGLQALVYQSSDPQIMEAFLHISGFTSYFSFVSKEIGIASVLFAGCKIFLPLLFISYAVGGTCEVLFAIIRKHKIAEGLLVTGMLYPLILPPTIPYWMAALGIAFGVVIGKELFGGTGMNILNPALTGRAFLFFTFPAKMSGDVWVGSNPSKIKESLAMMNSLAERSNFDGFSQSTCLQILNSTPPSVKRVHIDAIASNILKLEHVPSQEVLQSQFSTWAESFPGLTVDQLSLDQLQNFVTSPTAEGGLGLLPAHFDAAYSLTDAIYGIGKFSTGNLFFGNIVGSLGETSTVACLLGAGLLLLTGIASWRTMLSFGLSSLFFAWLFKIISILAAGQSGAWAPAKFFIPVYRHLFIGGLAFGLVFMATDPVTSPATKLAKWFYGAFIGFLTILIRLINPAYPEGVMLAILLGNVFAPSFDRIALKQYRQRRV.

Transmembrane regions (helical) follow at residues 55-75 (MMLVVIALMPTVFVAIWNSGL), 85-105 (PQIMEAFLHISGFTSYFSFVS), 120-142 (IFLPLLFISYAVGGTCEVLFAII), 161-181 (ILPPTIPYWMAALGIAFGVVI), and 186-206 (FGGTGMNILNPALTGRAFLFF). Thr248 is subject to FMN phosphoryl threonine. The next 5 membrane-spanning stretches (helical) occupy residues 361 to 381 (TSTVACLLGAGLLLLTGIASW), 387 to 407 (FGLSSLFFAWLFKIISILAAG), 417 to 437 (FFIPVYRHLFIGGLAFGLVFM), 452 to 472 (WFYGAFIGFLTILIRLINPAY), and 475 to 495 (GVMLAILLGNVFAPSFDRIAL).

This sequence belongs to the NqrB/RnfD family. Composed of six subunits; NqrA, NqrB, NqrC, NqrD, NqrE and NqrF. The cofactor is FMN.

It is found in the cell inner membrane. The catalysed reaction is a ubiquinone + n Na(+)(in) + NADH + H(+) = a ubiquinol + n Na(+)(out) + NAD(+). Its function is as follows. NQR complex catalyzes the reduction of ubiquinone-1 to ubiquinol by two successive reactions, coupled with the transport of Na(+) ions from the cytoplasm to the periplasm. NqrA to NqrE are probably involved in the second step, the conversion of ubisemiquinone to ubiquinol. This Chlamydia muridarum (strain MoPn / Nigg) protein is Na(+)-translocating NADH-quinone reductase subunit B.